Reading from the N-terminus, the 66-residue chain is Trypsin inhibitor (66 aa).

5 disulfide bridges follow: Cys-5/Cys-28, Cys-16/Cys-44, Cys-19/Cys-58, Cys-21/Cys-38, and Cys-43/Cys-64.

Its subcellular location is the secreted. The sequence is that of Trypsin inhibitor from Ascaris suum (Pig roundworm).